Consider the following 300-residue polypeptide: Erythroblast NAD(P)(+)--arginine ADP-ribosyltransferase (300 aa).

Positions 1 to 22 (MEEPLLHAILGLVLLLSTRTDA) are cleaved as a signal peptide. 2 cysteine pairs are disulfide-bonded: cysteine 51-cysteine 260 and cysteine 159-cysteine 208. The TR mART core domain occupies 70–256 (ETFAEGWRSA…IQLRSQGKSS (187 aa)). NAD(+) contacts are provided by tyrosine 107, arginine 164, and glutamine 183. Arginine 164 is a catalytic residue. Serine 186 is a catalytic residue. NAD(+) is bound at residue serine 217. The active site involves glutamate 224. Residues 276–300 (SADKSSPLPRSPWPGWAPLAAPHSH) form a disordered region.

The protein belongs to the Arg-specific ADP-ribosyltransferase family.

The enzyme catalyses L-arginyl-[protein] + NAD(+) = N(omega)-(ADP-D-ribosyl)-L-arginyl-[protein] + nicotinamide + H(+). The chain is Erythroblast NAD(P)(+)--arginine ADP-ribosyltransferase (MADPRT) from Gallus gallus (Chicken).